Here is a 153-residue protein sequence, read N- to C-terminus: Endoribonuclease YbeY (153 aa).

Zn(2+) contacts are provided by His114, His118, and His124.

Belongs to the endoribonuclease YbeY family. It depends on Zn(2+) as a cofactor.

The protein localises to the cytoplasm. Single strand-specific metallo-endoribonuclease involved in late-stage 70S ribosome quality control and in maturation of the 3' terminus of the 16S rRNA. In Shewanella amazonensis (strain ATCC BAA-1098 / SB2B), this protein is Endoribonuclease YbeY.